Reading from the N-terminus, the 216-residue chain is Cytidylate kinase (216 aa).

7–15 (GPSGTGKST) is an ATP binding site.

The protein belongs to the cytidylate kinase family. Type 1 subfamily.

It is found in the cytoplasm. It carries out the reaction CMP + ATP = CDP + ADP. It catalyses the reaction dCMP + ATP = dCDP + ADP. The polypeptide is Cytidylate kinase (Chlamydia caviae (strain ATCC VR-813 / DSM 19441 / 03DC25 / GPIC) (Chlamydophila caviae)).